The primary structure comprises 659 residues: Threonine--tRNA ligase (659 aa).

Residues 1-61 enclose the TGS domain; the sequence is MSAVPELRIT…ADGDVVEEIR (61 aa). Residues 260–555 form a catalytic region; the sequence is DHRKLGVELD…LLEHYAGAFP (296 aa). 3 residues coordinate Zn(2+): Cys-353, His-404, and His-532.

It belongs to the class-II aminoacyl-tRNA synthetase family. As to quaternary structure, homodimer. Zn(2+) serves as cofactor.

Its subcellular location is the cytoplasm. It carries out the reaction tRNA(Thr) + L-threonine + ATP = L-threonyl-tRNA(Thr) + AMP + diphosphate + H(+). Its function is as follows. Catalyzes the attachment of threonine to tRNA(Thr) in a two-step reaction: L-threonine is first activated by ATP to form Thr-AMP and then transferred to the acceptor end of tRNA(Thr). Also edits incorrectly charged L-seryl-tRNA(Thr). This Thermobifida fusca (strain YX) protein is Threonine--tRNA ligase.